The following is a 187-amino-acid chain: Holliday junction branch migration complex subunit RuvA (187 aa).

The tract at residues 1-64 is domain I; that stretch reads MIEYIRGIIE…EDGFQIFGFK (64 aa). Residues 65–136 form a domain II region; sequence RKEELELFEK…ELKDKVPKEV (72 aa). The tract at residues 136–139 is flexible linker; it reads VVVP. Residues 140 to 187 are domain III; sequence KEDSLLNEALEALLALGYTKSEAIYALSDVNCESVEQAVKEALKKLAK.

It belongs to the RuvA family. Homotetramer. Forms an RuvA(8)-RuvB(12)-Holliday junction (HJ) complex. HJ DNA is sandwiched between 2 RuvA tetramers; dsDNA enters through RuvA and exits via RuvB. An RuvB hexamer assembles on each DNA strand where it exits the tetramer. Each RuvB hexamer is contacted by two RuvA subunits (via domain III) on 2 adjacent RuvB subunits; this complex drives branch migration. In the full resolvosome a probable DNA-RuvA(4)-RuvB(12)-RuvC(2) complex forms which resolves the HJ.

The protein resides in the cytoplasm. Its function is as follows. The RuvA-RuvB-RuvC complex processes Holliday junction (HJ) DNA during genetic recombination and DNA repair, while the RuvA-RuvB complex plays an important role in the rescue of blocked DNA replication forks via replication fork reversal (RFR). RuvA specifically binds to HJ cruciform DNA, conferring on it an open structure. The RuvB hexamer acts as an ATP-dependent pump, pulling dsDNA into and through the RuvAB complex. HJ branch migration allows RuvC to scan DNA until it finds its consensus sequence, where it cleaves and resolves the cruciform DNA. This chain is Holliday junction branch migration complex subunit RuvA, found in Caldanaerobacter subterraneus subsp. tengcongensis (strain DSM 15242 / JCM 11007 / NBRC 100824 / MB4) (Thermoanaerobacter tengcongensis).